Reading from the N-terminus, the 503-residue chain is Maturase K (503 aa).

Belongs to the intron maturase 2 family. MatK subfamily.

The protein resides in the plastid. The protein localises to the chloroplast. In terms of biological role, usually encoded in the trnK tRNA gene intron. Probably assists in splicing its own and other chloroplast group II introns. The chain is Maturase K from Purshia tridentata (Antelope bitterbrush).